Reading from the N-terminus, the 264-residue chain is NFAT activation molecule 1 (264 aa).

Residues 1-37 (MESWLLRRGARVRCLHPPSWLPAWCFLCLLPVPQTLQ) form the signal peptide. The Extracellular segment spans residues 38–159 (LTGLVSLTHT…QPPAFKVQEA (122 aa)). One can recognise an Ig-like V-type domain in the interval 49-145 (LPIMVSLANT…QSDGVVILVR (97 aa)). The cysteines at positions 64 and 110 are disulfide-linked. 2 N-linked (GlcNAc...) asparagine glycosylation sites follow: Asn105 and Asn118. A helical membrane pass occupies residues 160-180 (LMLGFTSLMSVLGVLGTALLL). Over 181-264 (WKKKQISVLG…NEFNLVYENL (84 aa)) the chain is Cytoplasmic. Residues 212–232 (ESVYTSLQRRETEVYACMKEE) form the ITAM domain. 2 positions are modified to phosphotyrosine: Tyr215 and Tyr226.

In terms of assembly, no direct interaction with the B-cell antigen receptor (BCR). Interacts with SYK; probably involved in BCR signaling. Interacts with ZAP70. In terms of processing, N-glycosylated. Highly expressed in the spleen, expressed by both B- and CD4+ and CD8+ T-cells, as well as non-T- and non-B-cells, including macrophages and neutrophils. Expressed at low levels, if any, in non-immune tissue.

The protein resides in the cell membrane. Its function is as follows. May function in immune system as a receptor which activates via the calcineurin/NFAT-signaling pathway the downstream cytokine gene promoters. Activates the transcription of IL-13 and TNF-alpha promoters. May be involved in the regulation of B-cell, but not T-cell, development. The protein is NFAT activation molecule 1 (Nfam1) of Mus musculus (Mouse).